The chain runs to 145 residues: D-aminoacyl-tRNA deacylase (145 aa).

A Gly-cisPro motif, important for rejection of L-amino acids motif is present at residues 137-138; it reads GP.

This sequence belongs to the DTD family. Homodimer.

It localises to the cytoplasm. It carries out the reaction glycyl-tRNA(Ala) + H2O = tRNA(Ala) + glycine + H(+). The enzyme catalyses a D-aminoacyl-tRNA + H2O = a tRNA + a D-alpha-amino acid + H(+). An aminoacyl-tRNA editing enzyme that deacylates mischarged D-aminoacyl-tRNAs. Also deacylates mischarged glycyl-tRNA(Ala), protecting cells against glycine mischarging by AlaRS. Acts via tRNA-based rather than protein-based catalysis; rejects L-amino acids rather than detecting D-amino acids in the active site. By recycling D-aminoacyl-tRNA to D-amino acids and free tRNA molecules, this enzyme counteracts the toxicity associated with the formation of D-aminoacyl-tRNA entities in vivo and helps enforce protein L-homochirality. This is D-aminoacyl-tRNA deacylase from Shewanella halifaxensis (strain HAW-EB4).